Here is a 259-residue protein sequence, read N- to C-terminus: 3-oxo-5-alpha-steroid 4-dehydrogenase 1 (259 aa).

5 consecutive transmembrane segments (helical) span residues 12-29 (LLAA…AVFA), 86-106 (ILLA…PFLM), 111-131 (PMPL…GYLQ), 151-171 (FLIG…SDHI), and 209-229 (YALA…FCFL).

The protein belongs to the steroid 5-alpha reductase family. In terms of tissue distribution, liver and prostate (at a low level).

The protein localises to the microsome membrane. It is found in the endoplasmic reticulum membrane. It catalyses the reaction a 3-oxo-5alpha-steroid + NADP(+) = a 3-oxo-Delta(4)-steroid + NADPH + H(+). The enzyme catalyses androst-4-ene-3,17-dione + NADPH + H(+) = 5alpha-androstan-3,17-dione + NADP(+). It carries out the reaction 5alpha-pregnane-3,20-dione + NADP(+) = progesterone + NADPH + H(+). The catalysed reaction is 17beta-hydroxy-5alpha-androstan-3-one + NADP(+) = testosterone + NADPH + H(+). In terms of biological role, converts testosterone into 5-alpha-dihydrotestosterone and progesterone or corticosterone into their corresponding 5-alpha-3-oxosteroids. It plays a central role in sexual differentiation and androgen physiology. This chain is 3-oxo-5-alpha-steroid 4-dehydrogenase 1, found in Homo sapiens (Human).